The chain runs to 395 residues: Elongation factor Ts, mitochondrial (395 aa).

Residues 1–63 constitute a mitochondrion transit peptide; the sequence is MAFARAVRRP…RGFGNFIRSF (63 aa).

The protein belongs to the EF-Ts family.

The protein localises to the mitochondrion. Functionally, associates with the EF-Tu.GDP complex and induces the exchange of GDP to GTP. It remains bound to the aminoacyl-tRNA.EF-Tu.GTP complex up to the GTP hydrolysis stage on the ribosome. This is Elongation factor Ts, mitochondrial from Arabidopsis thaliana (Mouse-ear cress).